The chain runs to 432 residues: Glutamyl-tRNA reductase (432 aa).

Residues 55–58 (TCNR), serine 114, 119–121 (ETQ), and glutamine 125 contribute to the substrate site. Residue cysteine 56 is the Nucleophile of the active site. 194–199 (GAGEMI) is an NADP(+) binding site.

The protein belongs to the glutamyl-tRNA reductase family. Homodimer.

The catalysed reaction is (S)-4-amino-5-oxopentanoate + tRNA(Glu) + NADP(+) = L-glutamyl-tRNA(Glu) + NADPH + H(+). Its pathway is porphyrin-containing compound metabolism; protoporphyrin-IX biosynthesis; 5-aminolevulinate from L-glutamyl-tRNA(Glu): step 1/2. Catalyzes the NADPH-dependent reduction of glutamyl-tRNA(Glu) to glutamate 1-semialdehyde (GSA). In Burkholderia orbicola (strain AU 1054), this protein is Glutamyl-tRNA reductase.